A 308-amino-acid polypeptide reads, in one-letter code: MNFERKHIISTKDFSRDEIDFILDRAARLEPFARKGSTVLNGSIVATLFYEPSTRTRLSFDTAVKRLGGTTIGFDSAASSSTVKGETLADTIRIIDSYADAIVLRHPKEGAARMASEISRVPVINAGDGAGHHPTQTLLDLYTMRKECKKAICDLNVAIVGDLKYGRTVHSLAYALSLYGANLSFVSPEQLKMPGSIINYLKRKGLSITETSSLQDVLGRADVIYMTRIQKERFPDPAEYQKVAGTYRITPETLAGVGRDTIVMHPLPRVDEIAPEVDATKHARYFQQSFYGVPVRMAVLSLVMGVDI.

Positions 55 and 56 each coordinate carbamoyl phosphate. Residue Lys84 coordinates L-aspartate. Arg105, His133, and Gln136 together coordinate carbamoyl phosphate. The L-aspartate site is built by Arg167 and Arg228. Residues Leu267 and Pro268 each contribute to the carbamoyl phosphate site.

The protein belongs to the aspartate/ornithine carbamoyltransferase superfamily. ATCase family. In terms of assembly, heterooligomer of catalytic and regulatory chains.

It carries out the reaction carbamoyl phosphate + L-aspartate = N-carbamoyl-L-aspartate + phosphate + H(+). The protein operates within pyrimidine metabolism; UMP biosynthesis via de novo pathway; (S)-dihydroorotate from bicarbonate: step 2/3. Functionally, catalyzes the condensation of carbamoyl phosphate and aspartate to form carbamoyl aspartate and inorganic phosphate, the committed step in the de novo pyrimidine nucleotide biosynthesis pathway. The chain is Aspartate carbamoyltransferase catalytic subunit from Methanocella arvoryzae (strain DSM 22066 / NBRC 105507 / MRE50).